A 275-amino-acid polypeptide reads, in one-letter code: Shikimate dehydrogenase (NADP(+)) (275 aa).

Residues 15-17 (SKS) and threonine 62 contribute to the shikimate site. The active-site Proton acceptor is the lysine 66. Residue glutamate 78 coordinates NADP(+). 2 residues coordinate shikimate: asparagine 87 and aspartate 102. NADP(+) contacts are provided by residues 128-132 (GAGGA), 151-156 (NRTAEK), and leucine 218. Residue tyrosine 220 coordinates shikimate. Glycine 241 is an NADP(+) binding site.

This sequence belongs to the shikimate dehydrogenase family. Homodimer.

It catalyses the reaction shikimate + NADP(+) = 3-dehydroshikimate + NADPH + H(+). It participates in metabolic intermediate biosynthesis; chorismate biosynthesis; chorismate from D-erythrose 4-phosphate and phosphoenolpyruvate: step 4/7. Involved in the biosynthesis of the chorismate, which leads to the biosynthesis of aromatic amino acids. Catalyzes the reversible NADPH linked reduction of 3-dehydroshikimate (DHSA) to yield shikimate (SA). This is Shikimate dehydrogenase (NADP(+)) from Shouchella clausii (strain KSM-K16) (Alkalihalobacillus clausii).